Consider the following 325-residue polypeptide: Probable transcription factor At4g01260 (325 aa).

The disordered stretch occupies residues 1-98 (MAPKQLKKIE…SMGEEDVKKK (98 aa)). Composition is skewed to low complexity over residues 23 to 32 (ASSGESATSG) and 49 to 69 (KPVVVSKPSGSKTTTKPESST). A compositionally biased stretch (basic and acidic residues) spans 73–83 (RSFEKTDEMSK).

It belongs to the GeBP family.

This chain is Probable transcription factor At4g01260, found in Arabidopsis thaliana (Mouse-ear cress).